The following is a 718-amino-acid chain: MFNKHSVEIDWGGRPLKLETGKVARQADGAVVATYGETIVLATVVAAKTPREGVDFLPLTVDYQEKTYAAGRIPGGYFKREGRPTEKETLVSRLIDRPIRPLFADGWRNETQVIVTVLSHDMENDPDILAMVAASAALTLSGAPFKGPIGAARVGFINDEYVLNPVLDEMPETQLELVVAGTADAVLMVESEAKELSEEIMLGAVMFGHRHFQPVIDAIIELAEKAAKEPRELVVIDDSAIEKEMLGLVEQELRAAYAIPVKQERYAAVGKVKEKAIAHFFPEGEEPKYDKLRIAGVFKELEAKIVRWNILDTGKRIDGRDSKTVRSIIAEAGVLPRAHGSALFTRGETQALVVTTLGTGEDEQYVDSLAGTYKETFLLHYNFPPYSVGETGRLGGTKRREIGHGKLAWRAIRPVLPPHHEFPYTIRVVSEITESNGSSSMASVCGASLALMDAGVPLKRPTAGIAMGLILEGERFAVLSDILGDEDHLGDMDFKVAGTEQGITSLQMDIKIAGITEEIMKVALGQAKDGRIHILGEMSKALDRARAELGEHAPRIETFKIPTDKIREVIGTGGKVIREIVEKTGAKVNIEDDGTVKVASSDGESIKAAIKWIKSIASDPEVGEIYEGTVVKVMEFGAFVNFFGAKDGLVHISQLASGRVQKTSDVVKEGDKVKVKLLGFDDRGKTRLSMRVVDQETGEDLEAKQKAEGEAPAQATGE.

Residues D487 and D493 each coordinate Mg(2+). The KH domain occupies 554–613; it reads PRIETFKIPTDKIREVIGTGGKVIREIVEKTGAKVNIEDDGTVKVASSDGESIKAAIKWI. The S1 motif domain maps to 623–691; the sequence is GEIYEGTVVK…DRGKTRLSMR (69 aa). Residues 694-718 form a disordered region; sequence DQETGEDLEAKQKAEGEAPAQATGE.

Belongs to the polyribonucleotide nucleotidyltransferase family. Requires Mg(2+) as cofactor.

It is found in the cytoplasm. The enzyme catalyses RNA(n+1) + phosphate = RNA(n) + a ribonucleoside 5'-diphosphate. In terms of biological role, involved in mRNA degradation. Catalyzes the phosphorolysis of single-stranded polyribonucleotides processively in the 3'- to 5'-direction. This is Polyribonucleotide nucleotidyltransferase from Rhodopseudomonas palustris (strain HaA2).